A 158-amino-acid polypeptide reads, in one-letter code: Putative ribonucleoside-diphosphate reductase small chain B (158 aa).

The protein belongs to the ribonucleoside diphosphate reductase small chain family.

The protein is Putative ribonucleoside-diphosphate reductase small chain B (RNR2B) of Arabidopsis thaliana (Mouse-ear cress).